The sequence spans 134 residues: MKRFWAMVCALFLSVSLLLTSCANVPTGLTGNFREDTLALISSLREAIALPENDPNKKAAQAEARKKLNDFFALYRRDDSLRSLSSFMTMQTALNSLAGHYSSYPNRPLPEKLKARLEQEFKQVELALDREAKS.

The first 21 residues, 1 to 21 (MKRFWAMVCALFLSVSLLLTS), serve as a signal peptide directing secretion. Cys-22 is lipidated: N-palmitoyl cysteine. Cys-22 is lipidated: S-diacylglycerol cysteine.

The protein belongs to the Psb27 family. As to quaternary structure, part of a photosystem II (PSII) assembly intermediate complex PSII-I; crystallized from a strain deleted of psbJ, it forms monomeric PSII before addition of the oxygen evolving complex. PSII-I includes 3 assembly factors not found in mature PSII (Psb27, Psb28 and Psb34). Binds to the lumenal side of PSII, adjacent to the CP43 (psbC) subunit.

Its subcellular location is the cellular thylakoid membrane. Its function is as follows. Plays a role in the repair and/or biogenesis of the calcium-manganese-oxide cluster on the lumenal face of the thylakoid membrane. Its presence in a photosystem II (PSII) preparation prevents binding of other extrinsic subunits PsbO, PsbU and PsbV, and thus assembly of calcium-manganese-oxide cluster. Psb27-containing complexes lack oxygen evolving activity and an oxidizable calcium-manganese-oxide cluster, but have a normal reaction center. The protein is Photosystem II assembly factor lipoprotein Psb27 of Thermosynechococcus vestitus (strain NIES-2133 / IAM M-273 / BP-1).